A 60-amino-acid polypeptide reads, in one-letter code: Large ribosomal subunit protein uL30 (60 aa).

This sequence belongs to the universal ribosomal protein uL30 family. In terms of assembly, part of the 50S ribosomal subunit.

This chain is Large ribosomal subunit protein uL30, found in Thermus thermophilus (strain ATCC BAA-163 / DSM 7039 / HB27).